The primary structure comprises 958 residues: Dermatan-sulfate epimerase (958 aa).

The signal sequence occupies residues M1–A22. Over C23 to R902 the chain is Lumenal. A glycan (N-linked (GlcNAc...) asparagine) is linked at N183. H205 (proton donor) is an active-site residue. The active site involves Y261. Residues N336 and N411 are each glycosylated (N-linked (GlcNAc...) asparagine). Mn(2+)-binding residues include H452 and E470. Residue Y473 is part of the active site. N481 is a Mn(2+) binding site. 2 N-linked (GlcNAc...) asparagine glycosylation sites follow: N642 and N648. Residues L903–F923 traverse the membrane as a helical segment. Topologically, residues Q924 to R933 are cytoplasmic. The chain crosses the membrane as a helical span at residues C934 to S954. Residues Q955 to C958 lie on the Lumenal side of the membrane.

It belongs to the dermatan-sulfate isomerase family. Mn(2+) serves as cofactor. Post-translationally, N-glycosylated. Glycosylation is important for enzymatic activity.

It is found in the endoplasmic reticulum membrane. Its subcellular location is the golgi apparatus membrane. The protein localises to the cytoplasmic vesicle membrane. It localises to the microsome membrane. It catalyses the reaction chondroitin 4'-sulfate = dermatan 4'-sulfate. The protein operates within glycan metabolism; chondroitin sulfate biosynthesis. It functions in the pathway glycan metabolism; heparan sulfate biosynthesis. In terms of biological role, converts D-glucuronic acid to L-iduronic acid (IdoUA) residues. Plays an important role in the biosynthesis of the glycosaminoglycan/mucopolysaccharide dermatan sulfate. This chain is Dermatan-sulfate epimerase (DSE), found in Bos taurus (Bovine).